A 75-amino-acid polypeptide reads, in one-letter code: uncharacterized protein (75 aa).

It belongs to the HSBP1 family.

This is an uncharacterized protein from Schizosaccharomyces pombe (strain 972 / ATCC 24843) (Fission yeast).